The sequence spans 800 residues: General transcription and DNA repair factor IIH helicase/translocase subunit XPB (800 aa).

Positions 1-27 (MSSGDSNLKRRRGGNTGQSSKSYNTWT) are disordered. Polar residues predominate over residues 17–27 (GQSSKSYNTWT). In terms of domain architecture, Helicase ATP-binding spans 329–491 (MFGNGRARSG…DLNFLIGPKL (163 aa)). 342–349 (LPCGAGKS) lines the ATP pocket. The short motif at 444–447 (DEVH) is the DEVH box element. The 159-residue stretch at 546-704 (RACEYLIRFH…ELPGIDQEVN (159 aa)) folds into the Helicase C-terminal domain. The interval 743-769 (GAKKSKSSAPTVSRTTGGSTRALSGGN) is disordered. A compositionally biased stretch (polar residues) spans 749–764 (SSAPTVSRTTGGSTRA).

This sequence belongs to the helicase family. RAD25/XPB subfamily. As to quaternary structure, component of the 7-subunit TFIIH core complex composed of XPB/repB, XPD/repD, gtf2h1, gtf2h2, gtf2h3, gtf2h4 and gtf2h5, which is active in NER. The core complex associates with the 3-subunit CDK-activating kinase (CAK) module composed of cycH/cyclin H, cdk7 and mnat1 to form the 10-subunit holoenzyme (holo-TFIIH) active in transcription.

The protein resides in the nucleus. The enzyme catalyses Couples ATP hydrolysis with the unwinding of duplex DNA by translocating in the 3'-5' direction.. It carries out the reaction ATP + H2O = ADP + phosphate + H(+). ATP-dependent 3'-5' DNA helicase/translocase; binds dsDNA rather than ssDNA, unzipping it in a translocase rather than classical helicase activity. Component of the general transcription and DNA repair factor IIH (TFIIH) core complex. When complexed to CDK-activating kinase (CAK), involved in RNA transcription by RNA polymerase II. The ATPase activity of XPB/ERCC3, but not its helicase activity, is required for DNA opening; it may wrap around the damaged DNA wedging it open, causing localized melting and twisting that allows XPD/ERCC2 helicase to anchor. The ATP-dependent helicase activity of XPB/ERCC3 may be required for promoter escape. Also involved in transcription-coupled nucleotide excision repair (NER) of damaged DNA. In NER, TFIIH acts by opening DNA around the lesion to allow the excision of the damaged oligonucleotide and its replacement by a new DNA fragment. The structure of the TFIIH transcription complex differs from the NER-TFIIH complex. The sequence is that of General transcription and DNA repair factor IIH helicase/translocase subunit XPB from Dictyostelium discoideum (Social amoeba).